We begin with the raw amino-acid sequence, 80 residues long: Conotoxin Bu3 (80 aa).

The first 22 residues, 1-22 (MKLMCVLIVSVLVLTACQLSTA), serve as a signal peptide directing secretion. Residues 23–51 (DDTRDKQKDRLVRLFRKKRDSSDSGLLPR) constitute a propeptide that is removed on maturation. 3 disulfides stabilise this stretch: cysteine 53-cysteine 69, cysteine 60-cysteine 72, and cysteine 68-cysteine 79.

Belongs to the conotoxin O1 superfamily. In terms of tissue distribution, expressed by the venom duct.

The protein resides in the secreted. This Conus bullatus (Bubble cone) protein is Conotoxin Bu3.